We begin with the raw amino-acid sequence, 318 residues long: Cobalamin biosynthesis protein CobD (318 aa).

5 helical membrane-spanning segments follow: residues 56–76 (VLWL…LWLM), 78–98 (EINP…LLAG), 153–173 (VDGV…LAMA), 204–224 (LANW…AWLI), and 298–318 (MMAS…LVGI).

The protein belongs to the CobD/CbiB family.

The protein resides in the cell membrane. The protein operates within cofactor biosynthesis; adenosylcobalamin biosynthesis. Functionally, converts cobyric acid to cobinamide by the addition of aminopropanol on the F carboxylic group. The chain is Cobalamin biosynthesis protein CobD from Yersinia enterocolitica serotype O:8 / biotype 1B (strain NCTC 13174 / 8081).